We begin with the raw amino-acid sequence, 631 residues long: Hepatocyte nuclear factor 1-alpha (631 aa).

A dimerization region spans residues 1 to 31 (MVSKLSQLQTELLAALLESGLSKEALIQALG). The region spanning 1–32 (MVSKLSQLQTELLAALLESGLSKEALIQALGE) is the HNF-p1 domain. The tract at residues 40–81 (GEGPLDKGESCGGGRGELAELPNGLGETRGSEDETDDDGEDF) is disordered. At S70 the chain carries Phosphoserine. T74 carries the post-translational modification Phosphothreonine. Residues 87-182 (KELENLSPEE…VAQQFTHAGQ (96 aa)) form the POU-specific atypical domain. Position 93 is a phosphoserine (S93). K117 is covalently cross-linked (Glycyl lysine isopeptide (Lys-Gly) (interchain with G-Cter in ubiquitin)). 4 interaction with DNA regions span residues 130 to 132 (QRE), 143 to 149 (HLSQHLN), 155 to 158 (KTQK), and 203 to 206 (RFKW). The tract at residues 183–205 (GGLIEEPTGDELPTKKGRRNRFK) is disordered. Positions 197 to 205 (KKGRRNRFK) match the Nuclear localization signal motif. A DNA-binding region (homeobox; HNF1-type) is located at residues 199 to 279 (GRRNRFKWGP…NRRKEEAFRH (81 aa)). S247 is modified (phosphoserine). Interaction with DNA regions lie at residues 263–265 (RVY) and 270–273 (NRRK). Disordered regions lie at residues 283–358 (MDTY…GLEP) and 545–567 (SDTE…TLHV). Residues 288 to 298 (GPPPGPGPGPA) are compositionally biased toward pro residues. Residue S313 is modified to Phosphoserine. Positions 325–353 (PATSETAEVPSSSGGPLVTVSTPLHQVSP) are enriched in polar residues.

This sequence belongs to the HNF1 homeobox family. As to quaternary structure, binds DNA as a dimer. Heterotetramer with PCBD1; formed by a dimer of dimers. Interacts with PCBD1. Interacts with BHLHE41. Interacts with NR5A2. Interacts with SPOP; this interaction promotes ubiquitination and degradation of HNF1A. Post-translationally, ubiquitinated in s SPOP-dependent manner; leading to prteasomal degradation. In terms of tissue distribution, liver.

It localises to the nucleus. In terms of biological role, transcriptional activator that regulates the tissue specific expression of multiple genes, especially in pancreatic islet cells and in liver. Binds to the inverted palindrome 5'-GTTAATNATTAAC-3'. Activates the transcription of CYP1A2, CYP2E1 and CYP3A11. Its function is as follows. (Microbial infection) Plays a crucial role for hepatitis B virus gene transcription and DNA replication. Mechanistically, synergistically cooperates with NR5A2 to up-regulate the activity of one of the critical cis-elements in the hepatitis B virus genome enhancer II (ENII). The sequence is that of Hepatocyte nuclear factor 1-alpha (HNF1A) from Homo sapiens (Human).